The sequence spans 217 residues: Guanylate kinase (217 aa).

The segment covering 1 to 10 has biased composition (low complexity); it reads MAVSSTTLSS. The segment at 1–30 is disordered; the sequence is MAVSSTTLSSPTPPECLQQQEAPRPPATRG. In terms of domain architecture, Guanylate kinase-like spans 30-208; sequence GRLVVLTGPS…ALQELEALLY (179 aa). 37-44 is an ATP binding site; the sequence is GPSGVGKG.

This sequence belongs to the guanylate kinase family.

Its subcellular location is the cytoplasm. It catalyses the reaction GMP + ATP = GDP + ADP. The enzyme catalyses dZMP + ATP = dZDP + ADP. Its pathway is purine metabolism. Its function is as follows. Essential for recycling GMP and indirectly, cGMP. (Microbial infection) Catalyzes the phosphorylation of dZMP to dZDP, when the bacterium is infected by a phage that produces the substrate for the synthesis of dZTP (2- amino-2'-deoxyadenosine 5'-triphosphate), which is then used by the phage as a DNA polymerase substrate. The protein is Guanylate kinase of Synechococcus sp. (strain JA-3-3Ab) (Cyanobacteria bacterium Yellowstone A-Prime).